The sequence spans 271 residues: Urease accessory protein UreD (271 aa).

This sequence belongs to the UreD family. As to quaternary structure, ureD, UreF and UreG form a complex that acts as a GTP-hydrolysis-dependent molecular chaperone, activating the urease apoprotein by helping to assemble the nickel containing metallocenter of UreC. The UreE protein probably delivers the nickel.

It is found in the cytoplasm. Its function is as follows. Required for maturation of urease via the functional incorporation of the urease nickel metallocenter. This is Urease accessory protein UreD from Actinomyces naeslundii.